Reading from the N-terminus, the 432-residue chain is Cyclic GMP-AMP synthase (432 aa).

110-115 serves as a coordination point for GTP; it reads QGSFQY. Mg(2+) contacts are provided by Asp129 and Asp131. Arg180 serves as a coordination point for ATP. Asp191 lines the Mg(2+) pocket. Ser255 is an ATP binding site. GTP-binding residues include Lys283, Ser297, and Asp344. Gly432 participates in a covalent cross-link: Glycyl cysteine dithioester (Gly-Cys) (interchain with C-13 in Cap2). Residue Gly432 forms a Glycyl cysteine dithioester (Gly-Cys) (interchain with C-493 in Cap2) linkage. Gly432 participates in a covalent cross-link: Glycyl cysteine dithioester (Gly-Cys) (interchain with C-513 in Cap2). Residue Gly432 forms a Glycyl lysine isopeptide (Gly-Lys) (interchain with K-? in acceptor proteins) linkage.

The protein belongs to the CD-NTase family. A02 subfamily. A Cap2 dimer is bound on either side by a DncV monomer. Mg(2+) serves as cofactor. Post-translationally, in bacteria expressing capV-dncV-cap2-cap3, this protein is conjugated to about 130 cellular proteins by Cap2, most of which are involved in metabolism; more conjugated protein is found in the absence of Cap3. Most conjugation occurs via an isopeptide bond with the epsilon-amine of Lys on the target protein, but Cys-conjugation also occurs, including to Cap2. Conjugation or deconjugation from cellular proteins does not change the DncV activity in vitro, but does so in vivo during infection. (Microbial infection) During phage T4 infection is conjugated to at least 2 T4 proteins (fibritin (wac) and dexA.2).

It catalyses the reaction GTP + ATP = 3',3'-cGAMP + 2 diphosphate. Its activity is regulated as follows. Primed for activation by Cap2 which conjugates it to cellular proteins. cGAMP production is induced in phage T4 infected cells in a manner that requires Cap2 and Cap3, as well as a C-terminal Ala or Gly residue in this protein. Its function is as follows. Cyclic nucleotide synthase (second messenger synthase) of a CBASS antivirus system. CBASS (cyclic oligonucleotide-based antiphage signaling system) provides immunity against bacteriophages. The CD-NTase protein (DncV, this protein) synthesizes cyclic nucleotides in response to infection; these serve as specific second messenger signals. The signals activate a diverse range of effectors, leading to bacterial cell death and thus abortive phage infection. A type II-A(GA) CBASS system. Catalyzes the synthesis of 3',3'-cyclic GMP-AMP (cGAMP) from GTP and ATP, a second messenger in cell signal transduction. Its product controls the activity of cGAMP-activated phospholipase CapV, a patatin-like lipase that is a direct cGAMP receptor encoded in the dncV operon. Functionally, protects E.coli against phage infection. When capV and dncV are introduced in E.coli MG1655 there is 1000-fold protection against phage P1; protection against other phage (T2, T4, T5, T6 and lambda-vir) requires the 2 subsequent genes (cap2 and cap3). In another paper the capV-dncV-cap2-cap3 operon gives 10(4)-10(5)-fold protection against phages lambda, T2, T4 and T6, about 1000-fold protection against P1 and 10-fold protection against T5. The sequence is that of Cyclic GMP-AMP synthase from Escherichia coli (strain TW11681).